The chain runs to 392 residues: Nucleolysin TIAR (392 aa).

RRM domains are found at residues 9–102 (RTLY…WATT) and 114–192 (FHVF…WATR). The residue at position 139 (K139) is an N6-acetyllysine. S218 carries the post-translational modification Phosphoserine. An RRM 3 domain is found at 222–294 (CTVYCGGIAS…HVVKCYWGKE (73 aa)). Positions 363–392 (GAQPPQGQAPPPVIPPPNQAGYGMASFPTQ) are disordered. Residues 369 to 380 (GQAPPPVIPPPN) are compositionally biased toward pro residues.

As to quaternary structure, interacts with FASTK. Post-translationally, phosphorylated by MAPK14 following DNA damage, releasing TIAR from GADD45A mRNA. In terms of tissue distribution, expressed both in primordial germ cells (PGCs) and in neighboring somatic cells.

The protein resides in the nucleus. Its subcellular location is the cytoplasm. The protein localises to the stress granule. It is found in the cytolytic granule. Functionally, RNA-binding protein involved in alternative pre-RNA splicing and in cytoplasmic stress granules formation. Shows a preference for uridine-rich RNAs. Activates splicing of alternative exons with weak 5' splice sites followed by a U-rich stretch on its own pre-mRNA and on TIA1 mRNA. Promotes the inclusion of TIA1 exon 5 to give rise to the long isoform (isoform a) of TIA1. Acts downstream of the stress-induced phosphorylation of EIF2S1/EIF2A to promote the recruitment of untranslated mRNAs to cytoplasmic stress granules (SG). Possesses nucleolytic activity against cytotoxic lymphocyte target cells. May be involved in apoptosis. This Mus musculus (Mouse) protein is Nucleolysin TIAR (Tial1).